Here is a 538-residue protein sequence, read N- to C-terminus: uncharacterized protein (538 aa).

Disordered regions lie at residues 20–71 (RLSA…GGAQ), 151–211 (LWAE…EHPK), 288–331 (MLQP…QQHK), and 458–482 (EFEK…LKNY). The span at 154 to 171 (ESEKSESKGTRRDFRSYD) shows a compositional bias: basic and acidic residues.

This is an uncharacterized protein from Homo sapiens (Human).